Reading from the N-terminus, the 344-residue chain is Photosystem II protein D1 (344 aa).

T2 is subject to N-acetylthreonine. T2 is modified (phosphothreonine). Transmembrane regions (helical) follow at residues 29 to 46, 118 to 133, and 142 to 156; these read YIGWFGVLMFPLLLTATS, HFLLGVACYMGREWEL, and WIAVAYSAPVAAATA. H118 is a chlorophyll a binding site. Y126 contacts pheophytin a. Residues D170 and E189 each coordinate [CaMn4O5] cluster. A helical transmembrane segment spans residues 197–218; sequence FHMLGVAGVFGGSLFSAMHGSL. H198 provides a ligand contact to chlorophyll a. Residues H215 and 264–265 contribute to the a quinone site; that span reads SF. Fe cation is bound at residue H215. A Fe cation-binding site is contributed by H272. The helical transmembrane segment at 274–288 threads the bilayer; that stretch reads FLAAWPVVCIWFTAL. [CaMn4O5] cluster-binding residues include H332, E333, D342, and A344.

The protein belongs to the reaction center PufL/M/PsbA/D family. As to quaternary structure, PSII is composed of 1 copy each of membrane proteins PsbA, PsbB, PsbC, PsbD, PsbE, PsbF, PsbH, PsbI, PsbJ, PsbK, PsbL, PsbM, PsbT, PsbX, PsbY, PsbZ, Psb30/Ycf12, at least 3 peripheral proteins of the oxygen-evolving complex and a large number of cofactors. It forms dimeric complexes. The D1/D2 heterodimer binds P680, chlorophylls that are the primary electron donor of PSII, and subsequent electron acceptors. It shares a non-heme iron and each subunit binds pheophytin, quinone, additional chlorophylls, carotenoids and lipids. D1 provides most of the ligands for the Mn4-Ca-O5 cluster of the oxygen-evolving complex (OEC). There is also a Cl(-1) ion associated with D1 and D2, which is required for oxygen evolution. The PSII complex binds additional chlorophylls, carotenoids and specific lipids. serves as cofactor. Post-translationally, tyr-161 forms a radical intermediate that is referred to as redox-active TyrZ, YZ or Y-Z.

Its subcellular location is the plastid. It is found in the chloroplast thylakoid membrane. It catalyses the reaction 2 a plastoquinone + 4 hnu + 2 H2O = 2 a plastoquinol + O2. Functionally, photosystem II (PSII) is a light-driven water:plastoquinone oxidoreductase that uses light energy to abstract electrons from H(2)O, generating O(2) and a proton gradient subsequently used for ATP formation. It consists of a core antenna complex that captures photons, and an electron transfer chain that converts photonic excitation into a charge separation. The D1/D2 (PsbA/PsbD) reaction center heterodimer binds P680, the primary electron donor of PSII as well as several subsequent electron acceptors. In Staurastrum punctulatum (Green alga), this protein is Photosystem II protein D1.